Reading from the N-terminus, the 380-residue chain is 3-isopropylmalate dehydratase large subunit (380 aa).

[4Fe-4S] cluster contacts are provided by C262, C320, and C323.

This sequence belongs to the aconitase/IPM isomerase family. LeuC type 2 subfamily. In terms of assembly, heterodimer of LeuC and LeuD. [4Fe-4S] cluster is required as a cofactor.

It carries out the reaction (2R,3S)-3-isopropylmalate = (2S)-2-isopropylmalate. It participates in amino-acid biosynthesis; L-leucine biosynthesis; L-leucine from 3-methyl-2-oxobutanoate: step 2/4. Its function is as follows. Catalyzes the isomerization between 2-isopropylmalate and 3-isopropylmalate, via the formation of 2-isopropylmaleate. This Pyrococcus horikoshii (strain ATCC 700860 / DSM 12428 / JCM 9974 / NBRC 100139 / OT-3) protein is 3-isopropylmalate dehydratase large subunit.